A 256-amino-acid polypeptide reads, in one-letter code: Pimeloyl-[acyl-carrier protein] methyl ester esterase (256 aa).

Residues 16-240 (LVILHGWGVN…PKASHAPFLS (225 aa)) enclose the AB hydrolase-1 domain. Substrate is bound by residues Trp-22, 80–81 (SL), and 143–147 (FLAIQ). Residue Ser-80 is the Nucleophile of the active site. Active-site residues include Asp-207 and His-235. His-235 is a substrate binding site.

Belongs to the AB hydrolase superfamily. Carboxylesterase BioH family. Monomer.

Its subcellular location is the cytoplasm. The enzyme catalyses 6-carboxyhexanoyl-[ACP] methyl ester + H2O = 6-carboxyhexanoyl-[ACP] + methanol + H(+). Its pathway is cofactor biosynthesis; biotin biosynthesis. Functionally, the physiological role of BioH is to remove the methyl group introduced by BioC when the pimeloyl moiety is complete. It allows to synthesize pimeloyl-ACP via the fatty acid synthetic pathway through the hydrolysis of the ester bonds of pimeloyl-ACP esters. The protein is Pimeloyl-[acyl-carrier protein] methyl ester esterase of Shewanella woodyi (strain ATCC 51908 / MS32).